Consider the following 411-residue polypeptide: Phosphopentomutase (411 aa).

Residues Asp14, Asp306, His311, Asp347, His348, and His359 each contribute to the Mn(2+) site.

Belongs to the phosphopentomutase family. Mn(2+) serves as cofactor.

It is found in the cytoplasm. It carries out the reaction 2-deoxy-alpha-D-ribose 1-phosphate = 2-deoxy-D-ribose 5-phosphate. It catalyses the reaction alpha-D-ribose 1-phosphate = D-ribose 5-phosphate. It participates in carbohydrate degradation; 2-deoxy-D-ribose 1-phosphate degradation; D-glyceraldehyde 3-phosphate and acetaldehyde from 2-deoxy-alpha-D-ribose 1-phosphate: step 1/2. In terms of biological role, isomerase that catalyzes the conversion of deoxy-ribose 1-phosphate (dRib-1-P) and ribose 1-phosphate (Rib-1-P) to deoxy-ribose 5-phosphate (dRib-5-P) and ribose 5-phosphate (Rib-5-P), respectively. This chain is Phosphopentomutase, found in Lactococcus lactis subsp. cremoris (strain MG1363).